The primary structure comprises 247 residues: tRNA pseudouridine synthase A (247 aa).

Aspartate 52 serves as the catalytic Nucleophile. Residue tyrosine 113 coordinates substrate.

Belongs to the tRNA pseudouridine synthase TruA family. In terms of assembly, homodimer.

It carries out the reaction uridine(38/39/40) in tRNA = pseudouridine(38/39/40) in tRNA. Formation of pseudouridine at positions 38, 39 and 40 in the anticodon stem and loop of transfer RNAs. The polypeptide is tRNA pseudouridine synthase A (Bartonella tribocorum (strain CIP 105476 / IBS 506)).